The following is a 137-amino-acid chain: Nucleoside diphosphate kinase (137 aa).

Residues Lys10, Phe58, Arg86, Thr92, Arg103, and Asn113 each contribute to the ATP site. His116 functions as the Pros-phosphohistidine intermediate in the catalytic mechanism.

The protein belongs to the NDK family. Homotetramer. It depends on Mg(2+) as a cofactor.

The protein resides in the cytoplasm. It carries out the reaction a 2'-deoxyribonucleoside 5'-diphosphate + ATP = a 2'-deoxyribonucleoside 5'-triphosphate + ADP. It catalyses the reaction a ribonucleoside 5'-diphosphate + ATP = a ribonucleoside 5'-triphosphate + ADP. In terms of biological role, major role in the synthesis of nucleoside triphosphates other than ATP. The ATP gamma phosphate is transferred to the NDP beta phosphate via a ping-pong mechanism, using a phosphorylated active-site intermediate. In Helicobacter pylori (strain G27), this protein is Nucleoside diphosphate kinase.